A 337-amino-acid polypeptide reads, in one-letter code: Probable tyrosine--tRNA ligase, cytoplasmic (337 aa).

Tyr-35 provides a ligand contact to L-tyrosine. A 'HIGH' region motif is present at residues 40-48 (ITGKPHIAY). Tyr-162, Gln-166, Asp-169, and Gln-184 together coordinate L-tyrosine. The 'KMSKS' region signature appears at 218–222 (KMSSS).

This sequence belongs to the class-I aminoacyl-tRNA synthetase family. As to quaternary structure, homodimer.

It is found in the cytoplasm. It carries out the reaction tRNA(Tyr) + L-tyrosine + ATP = L-tyrosyl-tRNA(Tyr) + AMP + diphosphate + H(+). The chain is Probable tyrosine--tRNA ligase, cytoplasmic from Encephalitozoon cuniculi (strain GB-M1) (Microsporidian parasite).